A 290-amino-acid polypeptide reads, in one-letter code: GTPase Era (290 aa).

The Era-type G domain occupies 2 to 169 (KSGFAAILGR…KNKIYENFSE (168 aa)). A G1 region spans residues 10 to 17 (GRPSTGKS). Position 10 to 17 (10 to 17 (GRPSTGKS)) interacts with GTP. The tract at residues 36–40 (QTTRN) is G2. The G3 stretch occupies residues 57-60 (DTPG). GTP is bound by residues 57-61 (DTPGF) and 119-122 (NKVD). Residues 119 to 122 (NKVD) are G4. The segment at 148–150 (ISA) is G5. The KH type-2 domain occupies 200–276 (LKEELPYSLY…NLFLQVKLKK (77 aa)).

It belongs to the TRAFAC class TrmE-Era-EngA-EngB-Septin-like GTPase superfamily. Era GTPase family. As to quaternary structure, monomer.

The protein localises to the cytoplasm. Its subcellular location is the cell inner membrane. In terms of biological role, an essential GTPase that binds both GDP and GTP, with rapid nucleotide exchange. Plays a role in 16S rRNA processing and 30S ribosomal subunit biogenesis and possibly also in cell cycle regulation and energy metabolism. The sequence is that of GTPase Era from Borreliella afzelii (strain PKo) (Borrelia afzelii).